Here is a 221-residue protein sequence, read N- to C-terminus: Leucyl/phenylalanyl-tRNA--protein transferase (221 aa).

This sequence belongs to the L/F-transferase family.

Its subcellular location is the cytoplasm. It catalyses the reaction N-terminal L-lysyl-[protein] + L-leucyl-tRNA(Leu) = N-terminal L-leucyl-L-lysyl-[protein] + tRNA(Leu) + H(+). It carries out the reaction N-terminal L-arginyl-[protein] + L-leucyl-tRNA(Leu) = N-terminal L-leucyl-L-arginyl-[protein] + tRNA(Leu) + H(+). The enzyme catalyses L-phenylalanyl-tRNA(Phe) + an N-terminal L-alpha-aminoacyl-[protein] = an N-terminal L-phenylalanyl-L-alpha-aminoacyl-[protein] + tRNA(Phe). In terms of biological role, functions in the N-end rule pathway of protein degradation where it conjugates Leu, Phe and, less efficiently, Met from aminoacyl-tRNAs to the N-termini of proteins containing an N-terminal arginine or lysine. The polypeptide is Leucyl/phenylalanyl-tRNA--protein transferase (Phenylobacterium zucineum (strain HLK1)).